Here is a 122-residue protein sequence, read N- to C-terminus: NADH-quinone oxidoreductase subunit A (122 aa).

3 helical membrane-spanning segments follow: residues 10 to 30, 66 to 86, and 91 to 111; these read MIVLIFLLLGILLPVVALTLG, IFALLFVIFDVETLFLYPWAV, and LGLFALIEMLIFVVMLLVGLA.

Belongs to the complex I subunit 3 family. In terms of assembly, NDH-1 is composed of 14 different subunits. Subunits NuoA, H, J, K, L, M, N constitute the membrane sector of the complex.

Its subcellular location is the cell membrane. It carries out the reaction a quinone + NADH + 5 H(+)(in) = a quinol + NAD(+) + 4 H(+)(out). Its function is as follows. NDH-1 shuttles electrons from NADH, via FMN and iron-sulfur (Fe-S) centers, to quinones in the respiratory chain. The immediate electron acceptor for the enzyme in this species is believed to be a menaquinone. Couples the redox reaction to proton translocation (for every two electrons transferred, four hydrogen ions are translocated across the cytoplasmic membrane), and thus conserves the redox energy in a proton gradient. This Bacillus mycoides (strain KBAB4) (Bacillus weihenstephanensis) protein is NADH-quinone oxidoreductase subunit A.